The primary structure comprises 151 residues: Large ribosomal subunit protein bL9 (151 aa).

Belongs to the bacterial ribosomal protein bL9 family.

Functionally, binds to the 23S rRNA. This Azoarcus sp. (strain BH72) protein is Large ribosomal subunit protein bL9.